Consider the following 383-residue polypeptide: MGQIQLTDLTKRFGDTVAVDDLSLDIDDEEFLVLVGPSGCGKSTTLRMLAGLETPTSGDIYIGGDHMNYRVPQNRDIAMVFQDYALYPHMTVRQNIRFGLEEEEGYTSAERDERVVEVAETLGIADLLDRKPDELSGGQQQRVALGRAIVRDPEVFLMDEPLSNLDAKLRAEMRTELQNLQDQLAVTTVYVTHNQTEAMTMADRIAVMDDGELQQVASPFECYHEPNNLFVAEFIGEPMINLVRGTRSESTFVGEHFSYPLDEDVMESVDDRDDFVLGVRPEDIEVADAAPDDAALDDHDLQMDVTVVEPHGDQNVLHLSHPDQPSADDALQAVTEGMHLVTRGDRVTVTIPPDKIHLFDAETGTAVHNRRHDQEADFTQLEQ.

The region spanning 4–235 (IQLTDLTKRF…PNNLFVAEFI (232 aa)) is the ABC transporter domain. 36–43 (GPSGCGKS) contacts ATP.

The protein belongs to the ABC transporter superfamily. Carbohydrate uptake transporter-1 (CUT1) (TC 3.A.1.1) family. As to quaternary structure, the complex is composed of two ATP-binding proteins (XacJ and XacK), two transmembrane proteins (XacH and XacI) and a solute-binding protein (XacG).

Its subcellular location is the cell membrane. The enzyme catalyses D-xylose(out) + ATP + H2O = D-xylose(in) + ADP + phosphate + H(+). It carries out the reaction L-arabinose(out) + ATP + H2O = L-arabinose(in) + ADP + phosphate + H(+). Functionally, part of the ABC transporter complex XacGHIJK involved in the uptake of xylose and arabinose. Responsible for energy coupling to the transport system. In Haloferax volcanii (strain ATCC 29605 / DSM 3757 / JCM 8879 / NBRC 14742 / NCIMB 2012 / VKM B-1768 / DS2) (Halobacterium volcanii), this protein is Xylose/arabinose import ATP-binding protein XacJ.